Here is a 32-residue protein sequence, read N- to C-terminus: MGNEFIASASISFIITLIGLTLGFALLKLQGE.

The chain crosses the membrane as a helical span at residues 5-25 (FIASASISFIITLIGLTLGFA).

Belongs to the PetM family. The 4 large subunits of the cytochrome b6-f complex are cytochrome b6, subunit IV (17 kDa polypeptide, PetD), cytochrome f and the Rieske protein, while the 4 small subunits are PetG, PetL, PetM and PetN. The complex functions as a dimer.

It is found in the plastid. The protein localises to the chloroplast thylakoid membrane. In terms of biological role, component of the cytochrome b6-f complex, which mediates electron transfer between photosystem II (PSII) and photosystem I (PSI), cyclic electron flow around PSI, and state transitions. This chain is Cytochrome b6-f complex subunit 7, found in Guillardia theta (Cryptophyte).